Reading from the N-terminus, the 382-residue chain is Protein arginine N-methyltransferase 2 (382 aa).

ANK repeat units follow at residues 22–46 and 48–80; these read AAQTAAPSVLADLLAEGAPAWFQDD and LGWSCLHYAAERKEPECLEVLLQGGAVWNAVDK. Positions 134–382 constitute an RMT2 domain; the sequence is KTSAGDNLVF…RLPIAKMSLI (249 aa). S-adenosyl-L-methionine contacts are provided by residues F143, M177, 205–210, 228–230, 255–256, and D284; these read FGLGIV, EAH, and WQ.

It belongs to the class I-like SAM-binding methyltransferase superfamily. RMT2 methyltransferase family. Monomer.

It is found in the cytoplasm. The protein resides in the nucleus. S-adenosyl-L-methionine-dependent protein-arginine N-methyltransferase that methylates the delta-nitrogen atom of arginine residues to form N5-methylarginine (type IV) in target proteins. Monomethylates ribosomal protein L12. The chain is Protein arginine N-methyltransferase 2 from Cryptococcus neoformans var. neoformans serotype D (strain JEC21 / ATCC MYA-565) (Filobasidiella neoformans).